A 306-amino-acid polypeptide reads, in one-letter code: Pyridoxal 5'-phosphate synthase subunit PdxS (306 aa).

A D-ribose 5-phosphate-binding site is contributed by D36. K93 serves as the catalytic Schiff-base intermediate with D-ribose 5-phosphate. G165 contributes to the D-ribose 5-phosphate binding site. Residue R177 participates in D-glyceraldehyde 3-phosphate binding. D-ribose 5-phosphate is bound by residues G226 and 247–248; that span reads GS.

Belongs to the PdxS/SNZ family. As to quaternary structure, in the presence of PdxT, forms a dodecamer of heterodimers.

The catalysed reaction is aldehydo-D-ribose 5-phosphate + D-glyceraldehyde 3-phosphate + L-glutamine = pyridoxal 5'-phosphate + L-glutamate + phosphate + 3 H2O + H(+). The protein operates within cofactor biosynthesis; pyridoxal 5'-phosphate biosynthesis. Its function is as follows. Catalyzes the formation of pyridoxal 5'-phosphate from ribose 5-phosphate (RBP), glyceraldehyde 3-phosphate (G3P) and ammonia. The ammonia is provided by the PdxT subunit. Can also use ribulose 5-phosphate and dihydroxyacetone phosphate as substrates, resulting from enzyme-catalyzed isomerization of RBP and G3P, respectively. The chain is Pyridoxal 5'-phosphate synthase subunit PdxS from Salinispora tropica (strain ATCC BAA-916 / DSM 44818 / JCM 13857 / NBRC 105044 / CNB-440).